Reading from the N-terminus, the 681-residue chain is DNA-directed RNA polymerase subunit beta' (681 aa).

4 residues coordinate Zn(2+): C69, C71, C87, and C90. Residues D489, D491, and D493 each contribute to the Mg(2+) site.

This sequence belongs to the RNA polymerase beta' chain family. RpoC1 subfamily. As to quaternary structure, in plastids the minimal PEP RNA polymerase catalytic core is composed of four subunits: alpha, beta, beta', and beta''. When a (nuclear-encoded) sigma factor is associated with the core the holoenzyme is formed, which can initiate transcription. It depends on Mg(2+) as a cofactor. Zn(2+) is required as a cofactor.

It is found in the plastid. It localises to the chloroplast. It carries out the reaction RNA(n) + a ribonucleoside 5'-triphosphate = RNA(n+1) + diphosphate. In terms of biological role, DNA-dependent RNA polymerase catalyzes the transcription of DNA into RNA using the four ribonucleoside triphosphates as substrates. The chain is DNA-directed RNA polymerase subunit beta' from Nicotiana sylvestris (Wood tobacco).